A 187-amino-acid polypeptide reads, in one-letter code: UPF0200 protein MA_4660 (187 aa).

ATP is bound at residue 9 to 16 (GMPASGKS).

Belongs to the UPF0200 family.

The polypeptide is UPF0200 protein MA_4660 (Methanosarcina acetivorans (strain ATCC 35395 / DSM 2834 / JCM 12185 / C2A)).